Here is a 289-residue protein sequence, read N- to C-terminus: ATP synthase gamma chain (289 aa).

It belongs to the ATPase gamma chain family. F-type ATPases have 2 components, CF(1) - the catalytic core - and CF(0) - the membrane proton channel. CF(1) has five subunits: alpha(3), beta(3), gamma(1), delta(1), epsilon(1). CF(0) has three main subunits: a, b and c.

Its subcellular location is the cell membrane. Its function is as follows. Produces ATP from ADP in the presence of a proton gradient across the membrane. The gamma chain is believed to be important in regulating ATPase activity and the flow of protons through the CF(0) complex. In Lactococcus lactis subsp. cremoris (strain SK11), this protein is ATP synthase gamma chain.